The sequence spans 206 residues: Glycerol-3-phosphate acyltransferase (206 aa).

Helical transmembrane passes span 14-34 (IALA…GLIL), 67-87 (ATLL…GYFL), 91-111 (AAII…WIGF), 124-144 (LLGV…AVAF), and 148-168 (YSSL…LILG).

It belongs to the PlsY family. In terms of assembly, probably interacts with PlsX.

The protein resides in the cell inner membrane. The enzyme catalyses an acyl phosphate + sn-glycerol 3-phosphate = a 1-acyl-sn-glycero-3-phosphate + phosphate. Its pathway is lipid metabolism; phospholipid metabolism. Its function is as follows. Catalyzes the transfer of an acyl group from acyl-phosphate (acyl-PO(4)) to glycerol-3-phosphate (G3P) to form lysophosphatidic acid (LPA). This enzyme utilizes acyl-phosphate as fatty acyl donor, but not acyl-CoA or acyl-ACP. This is Glycerol-3-phosphate acyltransferase from Rhizobium etli (strain CIAT 652).